The primary structure comprises 250 residues: mRNA-decapping protein g5R (250 aa).

A Nudix hydrolase domain is found at 97-239; sequence QKFRKNWLLP…NLEPMIGPAF (143 aa). A Nudix box motif is present at residues 132–153; the sequence is GKPKEDESDLTCAIREFEEETG. Residue glutamate 138 participates in Mg(2+) binding. Residue glutamate 147 is the Nucleophile of the active site. Glutamate 151 and aspartate 173 together coordinate Mg(2+).

This sequence belongs to the Nudix hydrolase family. DIPP subfamily. As to quaternary structure, interacts with host RPL23A. Requires Mg(2+) as cofactor. Mn(2+) serves as cofactor.

The protein localises to the host rough endoplasmic reticulum. It catalyses the reaction diphospho-myo-inositol polyphosphate + H2O = myo-inositol polyphosphate + phosphate.. Functionally, decapping enzyme required for the removal of the 5'-end m7GpppN cap tethered to viral and host mRNAs to allow their decay in cells. May therefore accelerate viral and cellular mRNA turnover to eliminate competing host mRNAs and allow stage-specific synthesis of viral proteins. Acceleration of the turnover of cellular transcripts may even promote the shutoff of host protein synthesis. In addition to the mRNA cap, g5R also efficiently hydrolyzes diphosphoinositol polyphosphates. Down-regulation of the level of PP-InsP5 (diphosphoinositol pentakisphosphate) may play a role in viral manipulation of the cellular secretory pathway, a step necessary for the formation of virions. Binds viral and cellular poly(A) mRNAs, thereby decreasing both types of mRNAs. This is mRNA-decapping protein g5R from Ornithodoros (relapsing fever ticks).